The sequence spans 225 residues: Cyanamide hydratase DDI2 (225 aa).

The 111-residue stretch at 52-162 folds into the HD domain; sequence VLNHSLRVFQ…LQIATTLDNV (111 aa).

This sequence belongs to the cyanamide dehydrase family. As to quaternary structure, homohexamer. The cofactor is Zn(2+).

It carries out the reaction urea = cyanamide + H2O. Functionally, cyanamide hydratase involved in the detoxification and/or utilization of cyanamide, a toxic nitrile compound distributed widely in the environment. The sequence is that of Cyanamide hydratase DDI2 from Saccharomyces cerevisiae (strain ATCC 204508 / S288c) (Baker's yeast).